Consider the following 304-residue polypeptide: tRNA pseudouridine synthase B (304 aa).

The active-site Nucleophile is the Asp-41.

Belongs to the pseudouridine synthase TruB family. Type 1 subfamily.

The catalysed reaction is uridine(55) in tRNA = pseudouridine(55) in tRNA. In terms of biological role, responsible for synthesis of pseudouridine from uracil-55 in the psi GC loop of transfer RNAs. In Nitratidesulfovibrio vulgaris (strain ATCC 29579 / DSM 644 / CCUG 34227 / NCIMB 8303 / VKM B-1760 / Hildenborough) (Desulfovibrio vulgaris), this protein is tRNA pseudouridine synthase B.